We begin with the raw amino-acid sequence, 1659 residues long: Intersectin-2 (1659 aa).

In terms of domain architecture, EH 1 spans 22 to 110; sequence ERTKHDKQFD…PIMKQPPMFS (89 aa). The 36-residue stretch at 54–89 folds into the EF-hand 1 domain; the sequence is LPAPVLAEIWALSDLNKDGKMDQQEFSIAMKLIKLK. Asp67, Asn69, Asp71, Lys73, and Glu78 together coordinate Ca(2+). Phosphoserine is present on residues Ser110, Ser211, and Ser231. A compositionally biased stretch (low complexity) spans 220–231; sequence STSSTASLSGNS. The segment at 220 to 242 is disordered; that stretch reads STSSTASLSGNSPKTGTSEWAVP. The 90-residue stretch at 245–334 folds into the EH 2 domain; the sequence is SRLKYRQKFN…PELVPPSFRG (90 aa). Residues 278–313 form the EF-hand 2 domain; that stretch reads LSQTQLATIWTLADIDGDGQLKAEEFILAMHLTDMA. The segment at 335-382 is disordered; it reads GKQVDSVNGTLPSYQKTQEEEPQKKLPVTFEDKRKANYERGNMELEKR. Polar residues predominate over residues 339–350; it reads DSVNGTLPSYQK. Residues 351–382 show a composition bias toward basic and acidic residues; sequence TQEEEPQKKLPVTFEDKRKANYERGNMELEKR. The stretch at 365–717 forms a coiled coil; it reads EDKRKANYER…KAEAKQSETA (353 aa). Tyr554 is modified (phosphotyrosine). Thr574 carries the phosphothreonine modification. Over residues 689-713 the composition is skewed to basic and acidic residues; sequence KQKRLQEEKSQDKTQEEERKAEAKQ. The tract at residues 689-715 is disordered; that stretch reads KQKRLQEEKSQDKTQEEERKAEAKQSE. The SH3 1 domain maps to 718–779; it reads SALVNYRALY…PCNYVEKVLS (62 aa). Thr836 is subject to Phosphothreonine. Residues Ser838 and Ser843 each carry the phosphoserine modification. The 59-residue stretch at 852 to 910 folds into the SH3 2 domain; it reads VENLKAQALCSWTAKKENHLNFSKHDVITVLEQQENWWFGEVHGGRGWFPKSYVKLIPG. At Tyr922 the chain carries Phosphotyrosine. SH3 domains lie at 942-1000, 1014-1078, and 1088-1147; these read PVGE…PKDQ, KKPE…LLGP, and HAVC…MTTD. Residues 1170–1357 form the DH domain; the sequence is KRQGYIHELI…EELCSQVNEG (188 aa). One can recognise a PH domain in the interval 1396–1506; the sequence is KLLHSGKLYK…WVQKIKGASE (111 aa). Positions 1514-1630 constitute a C2 domain; that stretch reads KKREKAYQAR…RTEQESKGPT (117 aa). Ca(2+)-binding residues include Asp1602, Ser1605, and Asp1608.

Belongs to a complex that may contain multimers of ITSN1, ITSN2 and EPS15, and different partners according to the step in the endocytic process. Interacts with ADAM15. Interacts with FASLG. Interacts with ANKRD54. Interacts with FCHO2. Ca(2+) is required as a cofactor. As to expression, widely expressed in adult tissues.

It is found in the cytoplasm. In terms of biological role, adapter protein that may provide indirect link between the endocytic membrane traffic and the actin assembly machinery. May regulate the formation of clathrin-coated vesicles (CCPs). Seems to be involved in CCPs maturation including invagination or budding. Involved in endocytosis of integrin beta-1 (ITGB1) and transferrin receptor (TFR). Plays a role in dendrite formation by melanocytes. The protein is Intersectin-2 (Itsn2) of Mus musculus (Mouse).